The following is a 460-amino-acid chain: Serine--tRNA ligase (460 aa).

Positions 43–66 (AEGDGLRQERNEVSSKIGELKQDG) are enriched in basic and acidic residues. The disordered stretch occupies residues 43–81 (AEGDGLRQERNEVSSKIGELKQDGKDEEAQEAIDRSQEL). 242–244 (TAE) serves as a coordination point for L-serine. ATP is bound by residues 273–275 (RRE) and Val289. L-serine is bound at residue Glu296. An ATP-binding site is contributed by 369–372 (EVSS). Ser405 contacts L-serine.

This sequence belongs to the class-II aminoacyl-tRNA synthetase family. Type-1 seryl-tRNA synthetase subfamily. Homodimer. The tRNA molecule binds across the dimer.

It localises to the cytoplasm. The enzyme catalyses tRNA(Ser) + L-serine + ATP = L-seryl-tRNA(Ser) + AMP + diphosphate + H(+). It catalyses the reaction tRNA(Sec) + L-serine + ATP = L-seryl-tRNA(Sec) + AMP + diphosphate + H(+). Its pathway is aminoacyl-tRNA biosynthesis; selenocysteinyl-tRNA(Sec) biosynthesis; L-seryl-tRNA(Sec) from L-serine and tRNA(Sec): step 1/1. In terms of biological role, catalyzes the attachment of serine to tRNA(Ser). Is also probably able to aminoacylate tRNA(Sec) with serine, to form the misacylated tRNA L-seryl-tRNA(Sec), which will be further converted into selenocysteinyl-tRNA(Sec). This chain is Serine--tRNA ligase (serS), found in Haloarcula marismortui (strain ATCC 43049 / DSM 3752 / JCM 8966 / VKM B-1809) (Halobacterium marismortui).